The chain runs to 282 residues: Mitochondrial outer membrane protein porin (282 aa).

This sequence belongs to the eukaryotic mitochondrial porin family.

It is found in the mitochondrion outer membrane. In terms of biological role, forms a channel through the cell membrane that allows diffusion of small hydrophilic molecules. The channel adopts an open conformation at low or zero membrane potential and a closed conformation at potentials above 30-40 mV. The open state has a weak anion selectivity whereas the closed state is cation-selective. This Candida albicans (strain SC5314 / ATCC MYA-2876) (Yeast) protein is Mitochondrial outer membrane protein porin (POR1).